The sequence spans 354 residues: S-adenosylmethionine:tRNA ribosyltransferase-isomerase (354 aa).

It belongs to the QueA family. In terms of assembly, monomer.

It is found in the cytoplasm. The catalysed reaction is 7-aminomethyl-7-carbaguanosine(34) in tRNA + S-adenosyl-L-methionine = epoxyqueuosine(34) in tRNA + adenine + L-methionine + 2 H(+). Its pathway is tRNA modification; tRNA-queuosine biosynthesis. Transfers and isomerizes the ribose moiety from AdoMet to the 7-aminomethyl group of 7-deazaguanine (preQ1-tRNA) to give epoxyqueuosine (oQ-tRNA). The chain is S-adenosylmethionine:tRNA ribosyltransferase-isomerase from Salmonella paratyphi C (strain RKS4594).